The primary structure comprises 142 residues: Ribosome maturation factor RimP (142 aa).

This sequence belongs to the RimP family.

It is found in the cytoplasm. Required for maturation of 30S ribosomal subunits. This chain is Ribosome maturation factor RimP, found in Sulfurovum sp. (strain NBC37-1).